Reading from the N-terminus, the 311-residue chain is Oxygen-dependent coproporphyrinogen-III oxidase (311 aa).

Position 100 (serine 100) interacts with substrate. The a divalent metal cation site is built by histidine 104 and histidine 114. Histidine 114 serves as the catalytic Proton donor. Position 116-118 (116-118 (NVR)) interacts with substrate. A divalent metal cation contacts are provided by histidine 153 and histidine 183. The tract at residues 248 to 283 (YAEFNLVYDRGTLFGLQSGGRTESILMSLPPIVHWE) is important for dimerization. 266–268 (GGR) is a substrate binding site.

It belongs to the aerobic coproporphyrinogen-III oxidase family. Homodimer. Requires a divalent metal cation as cofactor.

It is found in the cytoplasm. The enzyme catalyses coproporphyrinogen III + O2 + 2 H(+) = protoporphyrinogen IX + 2 CO2 + 2 H2O. It functions in the pathway porphyrin-containing compound metabolism; protoporphyrin-IX biosynthesis; protoporphyrinogen-IX from coproporphyrinogen-III (O2 route): step 1/1. In terms of biological role, involved in the heme biosynthesis. Catalyzes the aerobic oxidative decarboxylation of propionate groups of rings A and B of coproporphyrinogen-III to yield the vinyl groups in protoporphyrinogen-IX. This chain is Oxygen-dependent coproporphyrinogen-III oxidase, found in Legionella pneumophila (strain Corby).